Here is a 197-residue protein sequence, read N- to C-terminus: Imidazoleglycerol-phosphate dehydratase (197 aa).

The protein belongs to the imidazoleglycerol-phosphate dehydratase family.

The protein resides in the cytoplasm. It catalyses the reaction D-erythro-1-(imidazol-4-yl)glycerol 3-phosphate = 3-(imidazol-4-yl)-2-oxopropyl phosphate + H2O. The protein operates within amino-acid biosynthesis; L-histidine biosynthesis; L-histidine from 5-phospho-alpha-D-ribose 1-diphosphate: step 6/9. The polypeptide is Imidazoleglycerol-phosphate dehydratase (Chromobacterium violaceum (strain ATCC 12472 / DSM 30191 / JCM 1249 / CCUG 213 / NBRC 12614 / NCIMB 9131 / NCTC 9757 / MK)).